A 346-amino-acid chain; its full sequence is Biotin synthase (346 aa).

Residues 38 to 256 (QQVQVSTLLS…IAVARIMMPT (219 aa)) enclose the Radical SAM core domain. [4Fe-4S] cluster is bound by residues C53, C57, and C60. C97, C128, C188, and R260 together coordinate [2Fe-2S] cluster.

This sequence belongs to the radical SAM superfamily. Biotin synthase family. As to quaternary structure, homodimer. Requires [4Fe-4S] cluster as cofactor. [2Fe-2S] cluster is required as a cofactor.

It catalyses the reaction (4R,5S)-dethiobiotin + (sulfur carrier)-SH + 2 reduced [2Fe-2S]-[ferredoxin] + 2 S-adenosyl-L-methionine = (sulfur carrier)-H + biotin + 2 5'-deoxyadenosine + 2 L-methionine + 2 oxidized [2Fe-2S]-[ferredoxin]. Its pathway is cofactor biosynthesis; biotin biosynthesis; biotin from 7,8-diaminononanoate: step 2/2. Functionally, catalyzes the conversion of dethiobiotin (DTB) to biotin by the insertion of a sulfur atom into dethiobiotin via a radical-based mechanism. The sequence is that of Biotin synthase from Citrobacter koseri (strain ATCC BAA-895 / CDC 4225-83 / SGSC4696).